The sequence spans 322 residues: Heat-inducible transcription repressor HrcA (322 aa).

This sequence belongs to the HrcA family.

In terms of biological role, negative regulator of class I heat shock genes (grpE-dnaK-dnaJ and groELS operons). Prevents heat-shock induction of these operons. This chain is Heat-inducible transcription repressor HrcA, found in Staphylococcus carnosus (strain TM300).